A 473-amino-acid chain; its full sequence is Cholesterol 22-monohydroxylase CYP90B52 (473 aa).

A helical membrane pass occupies residues 2–22; the sequence is EGLLLLLPTAIIALYLYISLI. C422 contacts heme.

The protein belongs to the cytochrome P450 family. Mainly expressed in leaves and roots and, at low levels, in fruits and stems.

It localises to the membrane. The catalysed reaction is cholesterol + reduced [NADPH--hemoprotein reductase] + O2 = (22S)-22-hydroxycholesterol + oxidized [NADPH--hemoprotein reductase] + H2O + H(+). It participates in steroid metabolism; cholesterol metabolism. In terms of biological role, canonical brassinosteroid (BR)-biosynthetic enzyme capable of converting cholesterol to 22S-hydroxycholesterol via sterol-C22 hydroxylation. This Paris polyphylla (Daiswa polyphylla) protein is Cholesterol 22-monohydroxylase CYP90B52.